The sequence spans 124 residues: Fluoride-specific ion channel FluC (124 aa).

4 helical membrane-spanning segments follow: residues 5–25, 32–52, 61–81, and 94–114; these read LLVS…AVWF, FAFG…ITLG, LLFV…SAEV, and LAVI…GILV. Na(+) is bound by residues Gly69 and Thr72.

This sequence belongs to the fluoride channel Fluc/FEX (TC 1.A.43) family.

It is found in the cell inner membrane. The catalysed reaction is fluoride(in) = fluoride(out). Its activity is regulated as follows. Na(+) is not transported, but it plays an essential structural role and its presence is essential for fluoride channel function. In terms of biological role, fluoride-specific ion channel. Important for reducing fluoride concentration in the cell, thus reducing its toxicity. In Haemophilus ducreyi (strain 35000HP / ATCC 700724), this protein is Fluoride-specific ion channel FluC.